The chain runs to 77 residues: Metallocarboxypeptidase inhibitor (77 aa).

An N-terminal signal peptide occupies residues 1-32; the sequence is MAQKFTILFTILLVVIAAQDVMAQDATLTKLF. Glutamine 33 bears the Pyrrolidone carboxylic acid mark. 3 disulfide bridges follow: cysteine 39–cysteine 55, cysteine 43–cysteine 58, and cysteine 49–cysteine 65. A propeptide spans 70–77 (hydrophobic peptide); it reads GRAMAIGV.

The protein to potato MCPI. Ovaries.

In terms of biological role, may play a defensive role against insect attacks. In Solanum lycopersicum (Tomato), this protein is Metallocarboxypeptidase inhibitor.